The sequence spans 147 residues: Hemoglobin anodic subunit beta (147 aa).

Residues 2–147 enclose the Globin domain; the sequence is EWTEDERTAI…VTSALARQYH (146 aa). 2 residues coordinate heme b: His-63 and His-92.

It belongs to the globin family. In terms of assembly, heterotetramer of two alpha chains and two beta chains. Red blood cells.

In terms of biological role, involved in oxygen transport from gills to the various peripheral tissues. In Anguilla anguilla (European freshwater eel), this protein is Hemoglobin anodic subunit beta (hbb1).